Consider the following 428-residue polypeptide: 3-phosphoshikimate 1-carboxyvinyltransferase (428 aa).

The 3-phosphoshikimate site is built by Lys22, Ser23, and Arg27. Lys22 is a binding site for phosphoenolpyruvate. 2 residues coordinate phosphoenolpyruvate: Gly95 and Arg123. Residues Ser170, Ser171, Gln172, Ser197, Asp316, and Lys343 each contribute to the 3-phosphoshikimate site. Gln172 serves as a coordination point for phosphoenolpyruvate. Asp316 acts as the Proton acceptor in catalysis. Phosphoenolpyruvate-binding residues include Arg347, Arg390, and Lys414.

It belongs to the EPSP synthase family. In terms of assembly, monomer.

The protein localises to the cytoplasm. The catalysed reaction is 3-phosphoshikimate + phosphoenolpyruvate = 5-O-(1-carboxyvinyl)-3-phosphoshikimate + phosphate. Its pathway is metabolic intermediate biosynthesis; chorismate biosynthesis; chorismate from D-erythrose 4-phosphate and phosphoenolpyruvate: step 6/7. Catalyzes the transfer of the enolpyruvyl moiety of phosphoenolpyruvate (PEP) to the 5-hydroxyl of shikimate-3-phosphate (S3P) to produce enolpyruvyl shikimate-3-phosphate and inorganic phosphate. The protein is 3-phosphoshikimate 1-carboxyvinyltransferase of Laribacter hongkongensis (strain HLHK9).